Here is a 375-residue protein sequence, read N- to C-terminus: DNA replication and repair protein RecF (375 aa).

34–41 contacts ATP; that stretch reads GDNGAGKT.

Belongs to the RecF family.

It localises to the cytoplasm. Functionally, the RecF protein is involved in DNA metabolism; it is required for DNA replication and normal SOS inducibility. RecF binds preferentially to single-stranded, linear DNA. It also seems to bind ATP. The chain is DNA replication and repair protein RecF from Rhizobium rhizogenes (strain K84 / ATCC BAA-868) (Agrobacterium radiobacter).